Reading from the N-terminus, the 295-residue chain is GTPase Era (295 aa).

In terms of domain architecture, Era-type G spans 3 to 171 (KSGFITVIGR…LELMKKYLPE (169 aa)). The G1 stretch occupies residues 11–18 (GRPNVGKS). 11 to 18 (GRPNVGKS) lines the GTP pocket. Residues 37–41 (QTTRN) form a G2 region. Residues 58 to 61 (DTPG) are G3. GTP is bound by residues 58-62 (DTPGM) and 120-123 (NKID). The segment at 120-123 (NKID) is G4. The tract at residues 150 to 152 (ISA) is G5. The KH type-2 domain occupies 202 to 279 (LSEEVPHGIA…SLKVWVKVKK (78 aa)).

Belongs to the TRAFAC class TrmE-Era-EngA-EngB-Septin-like GTPase superfamily. Era GTPase family. As to quaternary structure, monomer.

The protein resides in the cytoplasm. It is found in the cell membrane. Functionally, an essential GTPase that binds both GDP and GTP, with rapid nucleotide exchange. Plays a role in 16S rRNA processing and 30S ribosomal subunit biogenesis and possibly also in cell cycle regulation and energy metabolism. This Clostridium tetani (strain Massachusetts / E88) protein is GTPase Era.